Consider the following 308-residue polypeptide: Tetraspanin-12 (308 aa).

The Cytoplasmic segment spans residues 1-41; sequence MANRRQPVQHRAQQRVYRQSQIRYAPGAGGESEISCCVKYS. A helical transmembrane segment spans residues 42–62; sequence VFSFNVIFFLLGFGLLLFGVW. Topologically, residues 63 to 86 are extracellular; it reads AQIEKNTFVNMLSKASKLYLDPTW. The helical transmembrane segment at 87-107 threads the bilayer; sequence PLLIVGFLTFIIGFSGCVGSL. Topologically, residues 108-112 are cytoplasmic; it reads RENTS. The helical transmembrane segment at 113 to 133 threads the bilayer; the sequence is FLTFYSTLLGLLLIAEFSAGV. Residues 134–268 are Extracellular-facing; sequence FAYACRDQLD…PKLQLWLNNN (135 aa). A glycan (N-linked (GlcNAc...) asparagine) is linked at Asn213. Residues 269–289 form a helical membrane-spanning segment; sequence MLLVAVSMVIIAIIQVLGICF. The Cytoplasmic portion of the chain corresponds to 290 to 308; that stretch reads AQNLKSDILAQRAKWYYTH.

Belongs to the tetraspanin (TM4SF) family. In terms of assembly, may interact with protease sup-17; the interaction promotes sup-17 cell membrane localization. Expressed in the germline.

Its subcellular location is the cell membrane. The protein resides in the cytoplasmic vesicle membrane. It localises to the endosome membrane. The protein localises to the early endosome membrane. It is found in the late endosome membrane. Its subcellular location is the recycling endosome membrane. The protein resides in the golgi apparatus. It localises to the trans-Golgi network membrane. Functionally, functions redundantly with tsp-14 isoform a to regulate body size, embryonic and vulva development. Functions redundantly with tsp-14 (isoforms a and b) to regulate cell fate specification in the postembryonic mesodermal M lineage and male development. May regulate BMP-like Sma/Mab signaling by mediating protease sup-17 trafficking to the cell surface. Together with tsp-14, functions redundantly to maintain cell surface levels of the BMP type II receptor daf-4 (but not BMP type I receptor sma-6), probably by regulating endosomal sorting of receptors and their targeting to degradative lysosomes. Together with tsp-14 involved in maintaining the structural and functional integrity of the endosomal network. Together with tsp-14, probably acts by modulating the activation of glp-1, a Notch-like receptor, to regulate germline maturation. Probably acts by modulating the activation of lin-12, a Notch-like receptor, to regulate cell fate specification such as the anchor cell/ventral uterine precursor cell decision. This chain is Tetraspanin-12, found in Caenorhabditis elegans.